The chain runs to 344 residues: L-rhamnose-proton symporter (344 aa).

10 helical membrane passes run 5–25 (ILLG…FYAP), 38–58 (WAIA…YWLL), 72–92 (ILLP…GYGL), 101–121 (MGIG…TPII), 137–157 (TLIG…AGLL), 175–195 (LALA…MSAA), 214–234 (LPSY…FCII), 259–279 (ILFS…YAWG), 289–309 (FMSW…VGLL), and 323–343 (VLCI…LGMA).

It belongs to the L-rhamnose transporter (TC 2.A.7.6) family.

It is found in the cell inner membrane. It catalyses the reaction L-rhamnopyranose(in) + H(+)(in) = L-rhamnopyranose(out) + H(+)(out). In terms of biological role, uptake of L-rhamnose across the cytoplasmic membrane with the concomitant transport of protons into the cell (symport system). This chain is L-rhamnose-proton symporter, found in Mannheimia succiniciproducens (strain KCTC 0769BP / MBEL55E).